Here is a 389-residue protein sequence, read N- to C-terminus: Chalcone synthase 1 (389 aa).

Cysteine 164 is an active-site residue.

It belongs to the thiolase-like superfamily. Chalcone/stilbene synthases family.

It catalyses the reaction (E)-4-coumaroyl-CoA + 3 malonyl-CoA + 3 H(+) = 2',4,4',6'-tetrahydroxychalcone + 3 CO2 + 4 CoA. It functions in the pathway secondary metabolite biosynthesis; flavonoid biosynthesis. Functionally, the primary product of this enzyme is 4,2',4',6'-tetrahydroxychalcone (also termed naringenin-chalcone or chalcone) which can under specific conditions spontaneously isomerize into naringenin. The chain is Chalcone synthase 1 (CHS1) from Solanum lycopersicum (Tomato).